The sequence spans 360 residues: Lipid-A-disaccharide synthase (360 aa).

This sequence belongs to the LpxB family.

The enzyme catalyses a lipid X + a UDP-2-N,3-O-bis[(3R)-3-hydroxyacyl]-alpha-D-glucosamine = a lipid A disaccharide + UDP + H(+). Its pathway is bacterial outer membrane biogenesis; LPS lipid A biosynthesis. Its function is as follows. Condensation of UDP-2,3-diacylglucosamine and 2,3-diacylglucosamine-1-phosphate to form lipid A disaccharide, a precursor of lipid A, a phosphorylated glycolipid that anchors the lipopolysaccharide to the outer membrane of the cell. This chain is Lipid-A-disaccharide synthase, found in Helicobacter pylori (strain Shi470).